The following is a 502-amino-acid chain: Cytochrome P450 71B16 (502 aa).

The chain crosses the membrane as a helical span at residues 1-21 (MAISLLCLFLITLVSLIFVVK). Residue Cys-444 coordinates heme.

It belongs to the cytochrome P450 family. The cofactor is heme.

The protein resides in the membrane. The chain is Cytochrome P450 71B16 (CYP71B16) from Arabidopsis thaliana (Mouse-ear cress).